Here is a 387-residue protein sequence, read N- to C-terminus: Succinate--CoA ligase [ADP-forming] subunit beta (387 aa).

ATP contacts are provided by residues Lys46, 53–55, Glu99, Ala102, and Glu107; that span reads GRG. Positions 199 and 213 each coordinate Mg(2+). Substrate-binding positions include Asn264 and 321–323; that span reads GIV.

This sequence belongs to the succinate/malate CoA ligase beta subunit family. In terms of assembly, heterotetramer of two alpha and two beta subunits. Requires Mg(2+) as cofactor.

It catalyses the reaction succinate + ATP + CoA = succinyl-CoA + ADP + phosphate. It carries out the reaction GTP + succinate + CoA = succinyl-CoA + GDP + phosphate. The protein operates within carbohydrate metabolism; tricarboxylic acid cycle; succinate from succinyl-CoA (ligase route): step 1/1. In terms of biological role, succinyl-CoA synthetase functions in the citric acid cycle (TCA), coupling the hydrolysis of succinyl-CoA to the synthesis of either ATP or GTP and thus represents the only step of substrate-level phosphorylation in the TCA. The beta subunit provides nucleotide specificity of the enzyme and binds the substrate succinate, while the binding sites for coenzyme A and phosphate are found in the alpha subunit. In Campylobacter jejuni (strain RM1221), this protein is Succinate--CoA ligase [ADP-forming] subunit beta.